Here is a 256-residue protein sequence, read N- to C-terminus: H-2 class II histocompatibility antigen, A-K alpha chain (256 aa).

An N-terminal signal peptide occupies residues methionine 1 to glycine 23. Positions glutamate 24–asparagine 111 are alpha-1. Topologically, residues glutamate 24 to glutamate 218 are extracellular. Residues asparagine 105 and asparagine 145 are each glycosylated (N-linked (GlcNAc...) asparagine). Positions glutamate 112–tryptophan 205 are alpha-2. Positions proline 114–glutamate 206 constitute an Ig-like C1-type domain. Cysteines 134 and 190 form a disulfide. The segment at glutamate 206–glutamate 218 is connecting peptide. A helical transmembrane segment spans residues threonine 219–isoleucine 241. Topologically, residues glutamine 242–leucine 256 are cytoplasmic.

Belongs to the MHC class II family.

The protein localises to the membrane. This chain is H-2 class II histocompatibility antigen, A-K alpha chain (H2-Aa), found in Mus musculus (Mouse).